A 292-amino-acid polypeptide reads, in one-letter code: MNGIINLRKEAGMTSHDAVFKLRKILKTKKIGHGGTLDPDVVGVLPIAVGKATRLVEFMQEEGKVYEGEITLGCSTTTEDASGDILDRTPVTELLEEALIDEAMESMTGEIRQIPPMYSAVKVNGRKLYEYARAGQEVERPERQVTIYSFKRTSPISYEDEQARFRFRVKCSKGTYVRTLSVDLGAKLGFASHMSQLTRTFSAGMSLDDALTLDEIAERVAVDDFSFLQPLELGIGDLVRVELSDEQVEDVRNGRFISLMSEEAELAGFYKEKLIAILEKREEAYKPRKVFL.

Asp-38 functions as the Nucleophile in the catalytic mechanism.

This sequence belongs to the pseudouridine synthase TruB family. Type 1 subfamily.

It carries out the reaction uridine(55) in tRNA = pseudouridine(55) in tRNA. Functionally, responsible for synthesis of pseudouridine from uracil-55 in the psi GC loop of transfer RNAs. This is tRNA pseudouridine synthase B from Streptococcus sanguinis (strain SK36).